The primary structure comprises 434 residues: Potassium/proton antiporter CemA (434 aa).

The next 5 helical transmembrane spans lie at 75–95 (LLEYKLSLWLIQLFLIFSLFF), 210–230 (LASLQYIGCLFFIPLGVSFFF), 311–331 (IVLHLLTDLIWFITLSCLFIL), 359–379 (ILLLTDLCIGFHSPHGWEIVI), and 395–415 (ISCFVSTFPVILDTVFKYLIF).

This sequence belongs to the CemA family.

The protein localises to the plastid. It is found in the chloroplast inner membrane. It catalyses the reaction K(+)(in) + H(+)(out) = K(+)(out) + H(+)(in). Functionally, contributes to K(+)/H(+) antiport activity by supporting proton efflux to control proton extrusion and homeostasis in chloroplasts in a light-dependent manner to modulate photosynthesis. Prevents excessive induction of non-photochemical quenching (NPQ) under continuous-light conditions. Indirectly promotes efficient inorganic carbon uptake into chloroplasts. This Marchantia polymorpha (Common liverwort) protein is Potassium/proton antiporter CemA.